A 358-amino-acid chain; its full sequence is Alanine racemase (358 aa).

The active-site Proton acceptor; specific for D-alanine is the K34. Position 34 is an N6-(pyridoxal phosphate)lysine (K34). R129 contributes to the substrate binding site. The active-site Proton acceptor; specific for L-alanine is Y254. M302 contacts substrate.

This sequence belongs to the alanine racemase family. It depends on pyridoxal 5'-phosphate as a cofactor.

It carries out the reaction L-alanine = D-alanine. The protein operates within amino-acid biosynthesis; D-alanine biosynthesis; D-alanine from L-alanine: step 1/1. Its function is as follows. Catalyzes the interconversion of L-alanine and D-alanine. May also act on other amino acids. This chain is Alanine racemase (alr), found in Hamiltonella defensa subsp. Acyrthosiphon pisum (strain 5AT).